Here is a 111-residue protein sequence, read N- to C-terminus: Complement inhibitor CirpT1 (111 aa).

The signal sequence occupies residues 1 to 19 (MATLIAARTKRKAPRVRIF). 4 disulfides stabilise this stretch: Cys-40/Cys-64, Cys-59/Cys-98, Cys-76/Cys-99, and Cys-85/Cys-104.

This sequence belongs to the CirpT family. Expressed in salivary glands.

It is found in the secreted. Functionally, complement inhibitor. Prevents complement-mediated activation of C5 by sterically preventing direct binding of C5 to its convertase (binding with domains MG4 and MG5). Binds C5 at a different binding site than the other tick complement inhibitors OmCI and RaCI3, and the drug eculizumab. Inhibits the complement in human, rat and guinea pig, and also shows a reduced inhibition in rabbit and pig. This chain is Complement inhibitor CirpT1, found in Rhipicephalus pulchellus (Yellow backed tick).